We begin with the raw amino-acid sequence, 162 residues long: Transcriptional repressor NrdR (162 aa).

A zinc finger spans residues 3–34 (CPFCQFEGLKVTDSRDAMEMNAIRRRRECLNC). In terms of domain architecture, ATP-cone spans 48–138 (VQVQKRDGTY…VYKRFKDLGE (91 aa)).

It belongs to the NrdR family. Zn(2+) is required as a cofactor.

Its function is as follows. Negatively regulates transcription of bacterial ribonucleotide reductase nrd genes and operons by binding to NrdR-boxes. This is Transcriptional repressor NrdR from Protochlamydia amoebophila (strain UWE25).